The sequence spans 419 residues: Tyrosine--tRNA ligase (419 aa).

Y34 serves as a coordination point for L-tyrosine. The 'HIGH' region signature appears at 39-48; sequence PTADSLHIGN. The L-tyrosine site is built by Y169 and Q173. The short motif at 230 to 234 is the 'KMSKS' region element; it reads KFGKT. ATP is bound at residue K233. The 68-residue stretch at 352-419 folds into the S4 RNA-binding domain; that stretch reads VPLVELLVSA…KKKYYLIRYA (68 aa).

The protein belongs to the class-I aminoacyl-tRNA synthetase family. TyrS type 1 subfamily. In terms of assembly, homodimer.

Its subcellular location is the cytoplasm. It catalyses the reaction tRNA(Tyr) + L-tyrosine + ATP = L-tyrosyl-tRNA(Tyr) + AMP + diphosphate + H(+). In terms of biological role, catalyzes the attachment of tyrosine to tRNA(Tyr) in a two-step reaction: tyrosine is first activated by ATP to form Tyr-AMP and then transferred to the acceptor end of tRNA(Tyr). This chain is Tyrosine--tRNA ligase, found in Bacillus caldotenax.